The following is a 240-amino-acid chain: MVLKCLECDKLLSSIEMAEFHSTKTSHDQFEETEEEIKKRSPEELKQAIEALREKAKEKKEKERILALEEKKTNYKILQKSNDETAQAMRKMQDQARLRDLQKIRQQKAEDAEQRKKILAEIERDKKRRAAERENKNSSVKETAAPIKQPKNANSSSTCTRTPPTSGRFSIRHDGQVCNITIAAEETLRQLAQQVAEKMNVSPPTKFTTTFPRASYGTDVFDKPVNQLDLFPSAVLIPQW.

The C2H2-type zinc-finger motif lies at 3-27; it reads LKCLECDKLLSSIEMAEFHSTKTSH. 2 disordered regions span residues 21–43 and 120–171; these read HSTKTSHDQFEETEEEIKKRSPE and AEIE…RFSI. Basic and acidic residues predominate over residues 120 to 136; it reads AEIERDKKRRAAERENK. Positions 155-166 are enriched in low complexity; the sequence is SSSTCTRTPPTS.

This is an uncharacterized protein from Schizosaccharomyces pombe (strain 972 / ATCC 24843) (Fission yeast).